A 203-amino-acid polypeptide reads, in one-letter code: Glycerol-3-phosphate acyltransferase (203 aa).

Helical transmembrane passes span 6–26 (LTLL…AVLV), 82–102 (AISL…PIFF), 118–138 (APIG…LVLI), and 141–161 (YSSL…WWLD).

It belongs to the PlsY family. As to quaternary structure, probably interacts with PlsX.

The protein localises to the cell inner membrane. It catalyses the reaction an acyl phosphate + sn-glycerol 3-phosphate = a 1-acyl-sn-glycero-3-phosphate + phosphate. Its pathway is lipid metabolism; phospholipid metabolism. In terms of biological role, catalyzes the transfer of an acyl group from acyl-phosphate (acyl-PO(4)) to glycerol-3-phosphate (G3P) to form lysophosphatidic acid (LPA). This enzyme utilizes acyl-phosphate as fatty acyl donor, but not acyl-CoA or acyl-ACP. The polypeptide is Glycerol-3-phosphate acyltransferase (Shewanella sp. (strain MR-4)).